The sequence spans 164 residues: UPF0304 protein YE1336 (164 aa).

This sequence belongs to the UPF0304 family.

This is UPF0304 protein YE1336 from Yersinia enterocolitica serotype O:8 / biotype 1B (strain NCTC 13174 / 8081).